We begin with the raw amino-acid sequence, 229 residues long: Endonuclease V (229 aa).

The Mg(2+) site is built by D43 and D111.

Belongs to the endonuclease V family. The cofactor is Mg(2+).

The protein resides in the cytoplasm. The enzyme catalyses Endonucleolytic cleavage at apurinic or apyrimidinic sites to products with a 5'-phosphate.. In terms of biological role, DNA repair enzyme involved in the repair of deaminated bases. Selectively cleaves double-stranded DNA at the second phosphodiester bond 3' to a deoxyinosine leaving behind the intact lesion on the nicked DNA. The chain is Endonuclease V from Rippkaea orientalis (strain PCC 8801 / RF-1) (Cyanothece sp. (strain PCC 8801)).